The following is a 158-amino-acid chain: Small ribosomal subunit protein uS7 (158 aa).

This sequence belongs to the universal ribosomal protein uS7 family. In terms of assembly, part of the 30S ribosomal subunit. Contacts proteins S9 and S11.

Functionally, one of the primary rRNA binding proteins, it binds directly to 16S rRNA where it nucleates assembly of the head domain of the 30S subunit. Is located at the subunit interface close to the decoding center, probably blocks exit of the E-site tRNA. This chain is Small ribosomal subunit protein uS7, found in Gluconacetobacter diazotrophicus (strain ATCC 49037 / DSM 5601 / CCUG 37298 / CIP 103539 / LMG 7603 / PAl5).